Consider the following 160-residue polypeptide: Growth arrest and DNA damage-inducible protein GADD45 beta (160 aa).

This sequence belongs to the GADD45 family. Interacts with GADD45GIP1.

Functionally, involved in the regulation of growth and apoptosis. Mediates activation of stress-responsive MTK1/MEKK4 MAPKKK. The chain is Growth arrest and DNA damage-inducible protein GADD45 beta (GADD45B) from Bos taurus (Bovine).